The primary structure comprises 133 residues: ATP synthase epsilon chain (133 aa).

Belongs to the ATPase epsilon chain family. F-type ATPases have 2 components, CF(1) - the catalytic core - and CF(0) - the membrane proton channel. CF(1) has five subunits: alpha(3), beta(3), gamma(1), delta(1), epsilon(1). CF(0) has three main subunits: a, b and c.

It is found in the cell membrane. In terms of biological role, produces ATP from ADP in the presence of a proton gradient across the membrane. This is ATP synthase epsilon chain from Bacillus cereus (strain ATCC 14579 / DSM 31 / CCUG 7414 / JCM 2152 / NBRC 15305 / NCIMB 9373 / NCTC 2599 / NRRL B-3711).